The following is a 321-amino-acid chain: uncharacterized protein (321 aa).

The protein belongs to the NAD(P)-dependent epimerase/dehydratase family.

This is an uncharacterized protein from Staphylococcus aureus (strain bovine RF122 / ET3-1).